A 756-amino-acid chain; its full sequence is Multicystatin (756 aa).

Cystatin domains follow at residues 3 to 96, 97 to 191, 192 to 285, 286 to 380, 381 to 474, 475 to 568, 569 to 662, and 663 to 756; these read IVGG…DDST, MPGG…DDIA, KLGG…DDSA, KTGG…DSAK, IIGG…DDSA, and KPGG…DATK. 8 consecutive short sequence motifs (secondary area of contact) follow at residues 48–52, 142–146, 237–241, 331–335, 426–430, 520–524, 614–618, and 708–712; these read QIVAG, QVVAG, QLVSG, and QLVAG.

This sequence belongs to the cystatin family. Phytocystatin subfamily. As to expression, expressed abundantly in tuber and leaf.

Its function is as follows. Probably has a role in the plant's defense system. The protein is Multicystatin of Solanum tuberosum (Potato).